A 778-amino-acid chain; its full sequence is Arf-GAP with coiled-coil, ANK repeat and PH domain-containing protein 2 (778 aa).

Residues 1 to 226 (MKMTVDFEEC…MKDLGAQLDR (226 aa)) enclose the BAR domain. Residues 266-361 (GIVMEGYLFK…WIKAVQTSIA (96 aa)) enclose the PH domain. The segment at 371–391 (SEKLDKKSSPSTGSLDSGNES) is disordered. Over residues 379–388 (SPSTGSLDSG) the composition is skewed to polar residues. Residues S384 and S387 each carry the phosphoserine modification. The 122-residue stretch at 399–520 (ESALQRVQCV…KFVDKYSVSS (122 aa)) folds into the Arf-GAP domain. The C4-type zinc finger occupies 414 to 437 (CCDCGLADPRWASINLGITLCIEC). Positions 518-596 (VSSSPPEQEK…EPEGERQDSS (79 aa)) are disordered. S521 is subject to Phosphoserine. Over residues 524–539 (EQEKKVVSKDSEEKRL) the composition is skewed to basic and acidic residues. Positions 550-569 (VRTSIQSSVKSNDSGIQQSS) are enriched in polar residues. S581 and S584 each carry phosphoserine. ANK repeat units follow at residues 640–669 (NKATPLIQAVLGGSLVTCEFLLQNGANVNQ), 673–702 (QGRGPLHHATVLGHTGQVCLFLKRGANQHA), and 706–735 (EGKDPLSIAVEAANADIVTLLRLARMNEEM). The residue at position 742 (Y742) is a Phosphotyrosine. A Phosphoserine modification is found at S775.

In terms of assembly, interacts with RAB35 (GTP-bound form); the interaction is direct and probably recruits ACAP2 to membranes. Interacts with MICALL1; the interaction is indirect through RAB35.

Its subcellular location is the endosome membrane. It is found in the cell membrane. Its activity is regulated as follows. GAP activity stimulated by phosphatidylinositol 4,5-bisphosphate (PIP2) and phosphatidic acid. Its function is as follows. GTPase-activating protein (GAP) for ADP ribosylation factor 6 (ARF6). Doesn't show GAP activity for RAB35. This is Arf-GAP with coiled-coil, ANK repeat and PH domain-containing protein 2 (ACAP2) from Oryctolagus cuniculus (Rabbit).